Reading from the N-terminus, the 324-residue chain is NAC domain-containing protein 30 (324 aa).

Positions 9 to 158 (MPPGFRFHPT…GWVVCRAFRK (150 aa)) constitute an NAC domain. The DNA-binding element occupies 109–164 (IGMRKTLVYYKGRAPNGRKSDWIMHEYRLQNSELAPVQEEGWVVCRAFRKPIPNQR). Residues 232–244 (LPQLDSPSLSPSL) are compositionally biased toward low complexity. The interval 232–259 (LPQLDSPSLSPSLGTNKDQNESFEQEEE) is disordered.

It belongs to the plant vascular related NAC-domain protein family. As to quaternary structure, forms homodimer and heterodimers with other VND proteins (e.g. NAC037/VND1, NAC076/VND2 and NAC105/VND3) via their N-termini. Interacts with NAC083/VNI2. As to expression, expressed in developing protoxylems in roots and shoots. Detected in root protoxylem poles and in vessels of protoxylems, outermost metaxylems, inner metaxylems, shoots and hypocotyls. Expressed in roots, hypocotyls, cotyledons and leaves. Accumulates in the xylem but not in interfascicular fibers or pith cells in inflorescence stems. Present in developing vessels of the secondary xylem in roots undergoing secondary growth.

It localises to the nucleus. Its function is as follows. Transcription activator that binds to the secondary wall NAC binding element (SNBE), 5'-(T/A)NN(C/T)(T/C/G)TNNNNNNNA(A/C)GN(A/C/T)(A/T)-3', in the promoter of target genes (e.g. genes involved in secondary wall biosynthesis, cell wall modification such as xylan accumulation, and programmed cell death). Involved in xylem formation in roots and shoots, especially regulating protoxylem vessel differentiation by promoting immature xylem vessel-specific genes expression. Can activate the expression of several genes including XCP1, MYB46, NAC010/SND3, MYB103, MYB58, MYB63, MYB83, KNAT7, ASL19 and ASL20. In terms of biological role, required for the soilborne fungal pathogen Verticillium longisporum-induced transdifferentiation of chloroplast-containing bundle sheath cells to functional xylem elements leading to stunted growth, vein clearing, and leaf chloroses, as well as xylem hyperplasia within the vasculature of leaves, hypocotyls, and roots due to reinitiation of cambial activity and transdifferentiation of xylem parenchyma cells. This developmental reprogramming also mediates an increased drought stress tolerance. The protein is NAC domain-containing protein 30 of Arabidopsis thaliana (Mouse-ear cress).